Reading from the N-terminus, the 641-residue chain is Epithelial sodium channel subunit beta (641 aa).

At 1–50 (MHVKKYLLKCLHRLQKGPGYTYKELLVWYCDNTNTHGPKRIIREGPKKKA) the chain is on the cytoplasmic side. Residues 51 to 71 (MWFLITLLFASLVCWQWGVFI) form a helical membrane-spanning segment. The Extracellular segment spans residues 72-533 (KTYLSWEVSV…GGQFGFWMGG (462 aa)). Intrachain disulfides connect cysteine 98–cysteine 273, cysteine 185–cysteine 190, cysteine 197–cysteine 204, cysteine 250–cysteine 257, cysteine 362–cysteine 449, cysteine 387–cysteine 445, cysteine 391–cysteine 441, cysteine 400–cysteine 427, and cysteine 402–cysteine 416. Residue asparagine 141 is glycosylated (N-linked (GlcNAc...) asparagine). 2 N-linked (GlcNAc...) asparagine glycosylation sites follow: asparagine 261 and asparagine 379. The helical transmembrane segment at 534–554 (SVLCLIEFAEIIIDFVWITII) threads the bilayer. At 555-641 (KLVALAKGLR…VESDSEGDAV (87 aa)) the chain is on the cytoplasmic side. The interval 596-641 (GHRSPDAEAYPDEQALPIPGTPPPNYDSLRLQPLDVVESDSEGDAV) is disordered. Positions 617-621 (PPPNY) match the PY motif; recruits WW domain-containing proteins and is thereby required for ubiquitination and inhibition of the channel by NEDD4 and NEDD4L motif. Residues 632–641 (VESDSEGDAV) are compositionally biased toward acidic residues. Phosphoserine is present on residues serine 634 and serine 636.

The protein belongs to the amiloride-sensitive sodium channel (TC 1.A.6) family. SCNN1B subfamily. In terms of assembly, component of the heterotrimeric epithelial sodium channel (ENaC) composed of an alpha/SCNN1A, a beta/SCNN1B and a gamma/SCNN1G subunit. Interacts with WWP1 (via WW domains). Interacts with WWP2 (via WW domains); inhibits the channel. Interacts with the full-length immature form of PCSK9 (pro-PCSK9). Interacts (N-glycosylated) with BPIFA1; the interaction is direct and inhibits the proteolytic processing of SCNN1A and SCNN1G and the activation of ENaC. Ubiquitinated. Can be ubiquitinated at multiple sites and undergo monoubiquitination and polyubiquitination. Ubiquitination by NEDD4 or NEDD4L inhibits the ENaC channel through endocytosis, intracellular retention and degradation of its individual subunits. However, some studies could not confirm the ubiquitination of this subunit of the ENaC. Post-translationally, phosphorylated on serine and threonine residues. Aldosterone and insulin increase the basal level of phosphorylation. In terms of processing, N-glycosylated. N-glycosylation is required for interaction with BPIFA1.

It is found in the apical cell membrane. The protein localises to the cytoplasmic vesicle membrane. The enzyme catalyses Na(+)(in) = Na(+)(out). Originally identified and characterized by its inhibition by the diuretic drug amiloride. Functionally, this is one of the three pore-forming subunits of the heterotrimeric epithelial sodium channel (ENaC), a critical regulator of sodium balance and fluid homeostasis. ENaC operates in epithelial tissues, where it mediates the electrodiffusion of sodium ions from extracellular fluid through the apical membrane of cells, with water following osmotically. It plays a key role in maintaining sodium homeostasis through electrogenic sodium reabsorption in the kidneys. Additionally, ENaC is essential for airway surface liquid homeostasis, which is crucial for proper mucus clearance. The sequence is that of Epithelial sodium channel subunit beta from Oryctolagus cuniculus (Rabbit).